The primary structure comprises 474 residues: Aspartyl/glutamyl-tRNA(Asn/Gln) amidotransferase subunit B (474 aa).

Belongs to the GatB/GatE family. GatB subfamily. As to quaternary structure, heterotrimer of A, B and C subunits.

It catalyses the reaction L-glutamyl-tRNA(Gln) + L-glutamine + ATP + H2O = L-glutaminyl-tRNA(Gln) + L-glutamate + ADP + phosphate + H(+). The enzyme catalyses L-aspartyl-tRNA(Asn) + L-glutamine + ATP + H2O = L-asparaginyl-tRNA(Asn) + L-glutamate + ADP + phosphate + 2 H(+). Functionally, allows the formation of correctly charged Asn-tRNA(Asn) or Gln-tRNA(Gln) through the transamidation of misacylated Asp-tRNA(Asn) or Glu-tRNA(Gln) in organisms which lack either or both of asparaginyl-tRNA or glutaminyl-tRNA synthetases. The reaction takes place in the presence of glutamine and ATP through an activated phospho-Asp-tRNA(Asn) or phospho-Glu-tRNA(Gln). The polypeptide is Aspartyl/glutamyl-tRNA(Asn/Gln) amidotransferase subunit B (Persephonella marina (strain DSM 14350 / EX-H1)).